The primary structure comprises 345 residues: Anthranilate phosphoribosyltransferase (345 aa).

5-phospho-alpha-D-ribose 1-diphosphate is bound by residues Gly-84, 87-88, Thr-92, 94-97, 112-120, and Ser-124; these read GD, NIST, and KHGNRSVSS. Gly-84 serves as a coordination point for anthranilate. Ser-96 contributes to the Mg(2+) binding site. Asn-115 serves as a coordination point for anthranilate. Arg-170 lines the anthranilate pocket. Mg(2+)-binding residues include Asp-229 and Glu-230.

Belongs to the anthranilate phosphoribosyltransferase family. In terms of assembly, homodimer. Mg(2+) is required as a cofactor.

It catalyses the reaction N-(5-phospho-beta-D-ribosyl)anthranilate + diphosphate = 5-phospho-alpha-D-ribose 1-diphosphate + anthranilate. The protein operates within amino-acid biosynthesis; L-tryptophan biosynthesis; L-tryptophan from chorismate: step 2/5. In terms of biological role, catalyzes the transfer of the phosphoribosyl group of 5-phosphorylribose-1-pyrophosphate (PRPP) to anthranilate to yield N-(5'-phosphoribosyl)-anthranilate (PRA). This chain is Anthranilate phosphoribosyltransferase, found in Xanthomonas euvesicatoria pv. vesicatoria (strain 85-10) (Xanthomonas campestris pv. vesicatoria).